Here is a 261-residue protein sequence, read N- to C-terminus: 1-(5-phosphoribosyl)-5-[(5-phosphoribosylamino)methylideneamino] imidazole-4-carboxamide isomerase (261 aa).

Residue D8 is the Proton acceptor of the active site. The Proton donor role is filled by D130.

It belongs to the HisA/HisF family.

The protein localises to the cytoplasm. The catalysed reaction is 1-(5-phospho-beta-D-ribosyl)-5-[(5-phospho-beta-D-ribosylamino)methylideneamino]imidazole-4-carboxamide = 5-[(5-phospho-1-deoxy-D-ribulos-1-ylimino)methylamino]-1-(5-phospho-beta-D-ribosyl)imidazole-4-carboxamide. It functions in the pathway amino-acid biosynthesis; L-histidine biosynthesis; L-histidine from 5-phospho-alpha-D-ribose 1-diphosphate: step 4/9. This chain is 1-(5-phosphoribosyl)-5-[(5-phosphoribosylamino)methylideneamino] imidazole-4-carboxamide isomerase, found in Prosthecochloris aestuarii (strain DSM 271 / SK 413).